Consider the following 321-residue polypeptide: uncharacterized protein (321 aa).

This sequence belongs to the NAD(P)-dependent epimerase/dehydratase family.

This is an uncharacterized protein from Staphylococcus aureus (strain MRSA252).